The chain runs to 229 residues: Extracellular small neutral protease (229 aa).

Positions 1-28 (MRMPLSVLTAAGLSLATLGLGTAGPASA) are cleaved as a signal peptide. Positions 29–81 (TPTAEGAPVVAYDGSPSAGSPADAKAEAAANRAFFEAVLRSVAEKRAANPKST) are excised as a propeptide. 2 residues coordinate Ca(2+): Asp-159 and Thr-161. His-166 lines the Zn(2+) pocket. Glu-167 is a catalytic residue. Residues His-170 and Asp-176 each contribute to the Zn(2+) site. Cys-182 and Cys-195 are disulfide-bonded.

This sequence belongs to the peptidase M7 family. Monomer. Requires Ca(2+) as cofactor. It depends on Zn(2+) as a cofactor.

It is found in the secreted. The catalysed reaction is Hydrolyzes proteins with a preference for Tyr or Phe in the P1' position. Has no action on amino-acid p-nitroanilides.. Its function is as follows. Milk hydrolyzing. This Streptomyces sp. (strain C5) protein is Extracellular small neutral protease (snpA).